The chain runs to 455 residues: DNA repair protein RadA (455 aa).

Residues 11–28 (CVGCGYVHPKWLGRCPEC) form a C4-type zinc finger. An ATP-binding site is contributed by 97–104 (GEPGIGKS). The RadA KNRFG motif signature appears at 250–254 (KNRFG). The lon-protease-like stretch occupies residues 350-455 (DIYVNVAGGI…IAEIFSKAKA (106 aa)).

It belongs to the RecA family. RadA subfamily.

Its function is as follows. DNA-dependent ATPase involved in processing of recombination intermediates, plays a role in repairing DNA breaks. Stimulates the branch migration of RecA-mediated strand transfer reactions, allowing the 3' invading strand to extend heteroduplex DNA faster. Binds ssDNA in the presence of ADP but not other nucleotides, has ATPase activity that is stimulated by ssDNA and various branched DNA structures, but inhibited by SSB. Does not have RecA's homology-searching function. The polypeptide is DNA repair protein RadA (Treponema pallidum (strain Nichols)).